Consider the following 188-residue polypeptide: Urease accessory protein UreE (188 aa).

The tract at residues 142-174 (AYQSQAGAGHHHHHDHDHGHSHDHSHTHSHADS) is disordered. Residues 157–172 (HDHGHSHDHSHTHSHA) show a composition bias toward basic and acidic residues.

It belongs to the UreE family.

It localises to the cytoplasm. Involved in urease metallocenter assembly. Binds nickel. Probably functions as a nickel donor during metallocenter assembly. The chain is Urease accessory protein UreE from Tolumonas auensis (strain DSM 9187 / NBRC 110442 / TA 4).